We begin with the raw amino-acid sequence, 48 residues long: Large ribosomal subunit protein bL33A (48 aa).

This sequence belongs to the bacterial ribosomal protein bL33 family.

The chain is Large ribosomal subunit protein bL33A from Bacillus anthracis.